Reading from the N-terminus, the 81-residue chain is Acyl carrier protein (81 aa).

Residues 4–79 (SEILEKVKAI…DVLDFINNKV (76 aa)) enclose the Carrier domain. O-(pantetheine 4'-phosphoryl)serine is present on S39.

This sequence belongs to the acyl carrier protein (ACP) family. In terms of processing, 4'-phosphopantetheine is transferred from CoA to a specific serine of apo-ACP by AcpS. This modification is essential for activity because fatty acids are bound in thioester linkage to the sulfhydryl of the prosthetic group.

The protein resides in the cytoplasm. It participates in lipid metabolism; fatty acid biosynthesis. Its function is as follows. Carrier of the growing fatty acid chain in fatty acid biosynthesis. In Thermosynechococcus vestitus (strain NIES-2133 / IAM M-273 / BP-1), this protein is Acyl carrier protein.